An 821-amino-acid polypeptide reads, in one-letter code: PX domain-containing protein C1450.12 (821 aa).

Positions 171-310 constitute a PX domain; that stretch reads AYVLGVRQST…SFLTDDPVTL (140 aa). Residues 235–271 are disordered; it reads KDDHDTYLNSSEDSTLSPLPSRSSDTNDPQSDSQHVL. Positions 241–268 are enriched in polar residues; sequence YLNSSEDSTLSPLPSRSSDTNDPQSDSQ. Residues Thr-260 and Thr-597 each carry the phosphothreonine modification. Composition is skewed to acidic residues over residues 737 to 746 and 754 to 766; these read GDEDDQDEND and EHMEDDDSVEEFD. The disordered stretch occupies residues 737–766; it reads GDEDDQDENDQVTKVEEEHMEDDDSVEEFD. Ser-761 carries the phosphoserine modification.

It localises to the mitochondrion membrane. This is PX domain-containing protein C1450.12 from Schizosaccharomyces pombe (strain 972 / ATCC 24843) (Fission yeast).